A 401-amino-acid chain; its full sequence is Mu-type opioid receptor (401 aa).

The Extracellular segment spans residues 1 to 69; that stretch reads MDSSAVPANA…CPPTGSPSMI (69 aa). 5 N-linked (GlcNAc...) asparagine glycosylation sites follow: asparagine 9, asparagine 12, asparagine 34, asparagine 41, and asparagine 49. The helical transmembrane segment at 70–94 threads the bilayer; the sequence is TAITIMALYSIVCVVGLFGNFLVMY. At 95–107 the chain is on the cytoplasmic side; that stretch reads VIVRYTKMKTATN. Residues 108–132 traverse the membrane as a helical segment; that stretch reads IYIFNLALADALATSTLPFQSVNYL. Over 133–143 the chain is Extracellular; the sequence is MGTWPFGTILC. Cysteine 143 and cysteine 220 are oxidised to a cystine. A helical transmembrane segment spans residues 144–166; it reads KIVISIDYYNMFTSIFTLCTMSV. Topologically, residues 167 to 186 are cytoplasmic; it reads DRYIAVCHPVKALDFRTPRN. Tyrosine 169 carries the post-translational modification Phosphotyrosine. Residues 187 to 208 traverse the membrane as a helical segment; that stretch reads AKIINVCNWILSSAIGLPVMFM. Over 209 to 231 the chain is Extracellular; it reads ATTKYRHGSIDCTLTFSHPTWYW. The chain crosses the membrane as a helical span at residues 232-256; it reads ENLLKICVFIFAFIMPVLIITVCYG. The Cytoplasmic segment spans residues 257-280; it reads LMILRLKSVRMLSGSKEKDRNLRR. The chain crosses the membrane as a helical span at residues 281–307; sequence ITRMVLVVVAVFIVCWTPIHIYVIIKA. Residues 308–315 lie on the Extracellular side of the membrane; it reads LVTIPETT. The helical transmembrane segment at 316–339 threads the bilayer; it reads FQTVSWHFCIALGYTNSCLNPVLY. Positions 335–339 match the NPxxY; plays a role in stabilizing the activated conformation of the receptor motif; the sequence is NPVLY. The Cytoplasmic segment spans residues 340 to 401; that stretch reads AFLDENFKRC…NLEAETAPLP (62 aa). Cysteine 354 carries the S-palmitoyl cysteine lipid modification. Residues 365–388 are disordered; sequence NSTRIRQNTRDHPSTANTVDRTNH. Residue serine 366 is modified to Phosphoserine. Threonine 373 is subject to Phosphothreonine. Serine 378 carries the post-translational modification Phosphoserine. Threonine 397 is subject to Phosphothreonine.

Belongs to the G-protein coupled receptor 1 family. Forms homooligomers and heterooligomers with other GPCRs, such as OPRD1, OPRK1, OPRL1, NPFFR2, ADRA2A, SSTR2, CNR1 and CCR5 (probably in dimeric forms). Interacts with heterotrimeric G proteins; interaction with a heterotrimeric complex containing GNAI1, GNB1 and GNG2 stabilizes the active conformation of the receptor and increases its affinity for endomorphin-2, the synthetic opioid peptide DAMGO and for morphinan agonists. Interacts with PPL; the interaction disrupts agonist-mediated G-protein activation. Interacts (via C-terminus) with DNAJB4 (via C-terminus). Interacts with calmodulin; the interaction inhibits the constitutive activity of OPRM1; it abolishes basal and attenuates agonist-stimulated G-protein coupling. Interacts with FLNA, PLD2, RANBP9 and WLS and GPM6A. Interacts with RTP4. Interacts with SYP and GNAS. Interacts with RGS9, RGS17, RGS20, RGS4, PPP1R9B and HINT1. Post-translationally, phosphorylated. Differentially phosphorylated in basal and agonist-induced conditions. Agonist-mediated phosphorylation modulates receptor internalization. Phosphorylated by GRK2 in a agonist-dependent manner. Phosphorylation at Tyr-169 requires receptor activation, is dependent on non-receptor protein tyrosine kinase Src and results in a decrease in agonist efficacy by reducing G-protein coupling efficiency. Phosphorylated on tyrosine residues; the phosphorylation is involved in agonist-induced G-protein-independent receptor down-regulation. Phosphorylation at Ser-378 is involved in G-protein-dependent but not beta-arrestin-dependent activation of the ERK pathway. Ubiquitinated. A basal ubiquitination seems not to be related to degradation. Ubiquitination is increased upon formation of OPRM1:OPRD1 oligomers leading to proteasomal degradation; the ubiquitination is diminished by RTP4.

It localises to the cell membrane. The protein localises to the cell projection. It is found in the axon. Its subcellular location is the perikaryon. The protein resides in the dendrite. It localises to the endosome. Its function is as follows. Receptor for endogenous opioids such as beta-endorphin and endomorphin. Receptor for natural and synthetic opioids including morphine, heroin, DAMGO, fentanyl, etorphine, buprenorphin and methadone. Also activated by enkephalin peptides, such as Met-enkephalin or Met-enkephalin-Arg-Phe, with higher affinity for Met-enkephalin-Arg-Phe. Agonist binding to the receptor induces coupling to an inactive GDP-bound heterotrimeric G-protein complex and subsequent exchange of GDP for GTP in the G-protein alpha subunit leading to dissociation of the G-protein complex with the free GTP-bound G-protein alpha and the G-protein beta-gamma dimer activating downstream cellular effectors. The agonist- and cell type-specific activity is predominantly coupled to pertussis toxin-sensitive G(i) and G(o) G alpha proteins, GNAI1, GNAI2, GNAI3 and GNAO1, and to a lesser extent to pertussis toxin-insensitive G alpha proteins GNAZ and GNA15. They mediate an array of downstream cellular responses, including inhibition of adenylate cyclase activity and both N-type and L-type calcium channels, activation of inward rectifying potassium channels, mitogen-activated protein kinase (MAPK), phospholipase C (PLC), phosphoinositide/protein kinase (PKC), phosphoinositide 3-kinase (PI3K) and regulation of NF-kappa-B. Also couples to adenylate cyclase stimulatory G alpha proteins. The selective temporal coupling to G-proteins and subsequent signaling can be regulated by RGSZ proteins, such as RGS9, RGS17 and RGS4. Phosphorylation by members of the GPRK subfamily of Ser/Thr protein kinases and association with beta-arrestins is involved in short-term receptor desensitization. Beta-arrestins associate with the GPRK-phosphorylated receptor and uncouple it from the G-protein thus terminating signal transduction. The phosphorylated receptor is internalized through endocytosis via clathrin-coated pits which involves beta-arrestins. The activation of the ERK pathway occurs either in a G-protein-dependent or a beta-arrestin-dependent manner and is regulated by agonist-specific receptor phosphorylation. Acts as a class A G-protein coupled receptor (GPCR) which dissociates from beta-arrestin at or near the plasma membrane and undergoes rapid recycling. Receptor down-regulation pathways are varying with the agonist and occur dependent or independent of G-protein coupling. Endogenous ligands induce rapid desensitization, endocytosis and recycling. Heterooligomerization with other GPCRs can modulate agonist binding, signaling and trafficking properties. Involved in neurogenesis. This is Mu-type opioid receptor (OPRM1) from Pan troglodytes (Chimpanzee).